A 333-amino-acid polypeptide reads, in one-letter code: MEDEDVPVCWICNEELGNERFRACGCTGELENVHRSCLSTWLTISRNTACQICGVVYNTRVVWRPLREMTLLPRLTYQEGLELIVFIFIMTLGAAGLAAATWVWLYIVGGHDPEIDHVAAAAYYVFFVFYQLFVVFGLGAFFHMMRHVGRAYAAVNTRVEVFPYRPRPTSPECAVEEIELQEILPRGDNQDEEGPAGAAPGDQNGPAGAAPGDQDGPADGAPVHRDSEESVDEAAGYKEAGEPTHNDGRDDNVEPTAVGCDCNNLGAERYRATYCGGYVGAQSGDGAYSVSCHNKAGPSSLVDILPQGLPGGGYGSMGVIRKRSAVSSALMFH.

The RING-CH-type zinc finger occupies 1 to 60 (MEDEDVPVCWICNEELGNERFRACGCTGELENVHRSCLSTWLTISRNTACQICGVVYNTR). Topologically, residues 1–82 (MEDEDVPVCW…PRLTYQEGLE (82 aa)) are cytoplasmic. Zn(2+) contacts are provided by C9, C12, C24, C26, H34, C37, C50, and C53. Residues 83-103 (LIVFIFIMTLGAAGLAAATWV) form a helical membrane-spanning segment. The Extracellular segment spans residues 104 to 121 (WLYIVGGHDPEIDHVAAA). Residues 122-142 (AYYVFFVFYQLFVVFGLGAFF) traverse the membrane as a helical segment. Over 143–333 (HMMRHVGRAY…SAVSSALMFH (191 aa)) the chain is Cytoplasmic. The disordered stretch occupies residues 187–257 (GDNQDEEGPA…GRDDNVEPTA (71 aa)). Low complexity predominate over residues 195 to 221 (PAGAAPGDQNGPAGAAPGDQDGPADGA). A compositionally biased stretch (basic and acidic residues) spans 235–252 (AGYKEAGEPTHNDGRDDN).

In terms of assembly, binds human MHC-I and CD1D.

The protein localises to the host cell membrane. It is found in the host endoplasmic reticulum. It carries out the reaction [E2 ubiquitin-conjugating enzyme]-S-ubiquitinyl-L-cysteine + [acceptor protein]-L-cysteine = [E2 ubiquitin-conjugating enzyme]-L-cysteine + [acceptor protein]-S-ubiquitinyl-L-cysteine.. It functions in the pathway protein modification; protein ubiquitination. Its function is as follows. Membrane-bound E3 ubiquitin ligase expressed during late stages of lytic replication to mediate polyubiquitination of various host membrane proteins related to the immune response. Promotes ubiquitination and subsequent degradation of host MHC-I and CD1D molecules, DC-SIGN and DC-SIGNR, presumably to prevent lysis of infected cells by cytotoxic T-lymphocytes. Binds target molecules through transmembrane interaction. E3 ubiquitin-protein ligases accept ubiquitin from specific E2 ubiquitin-conjugating enzymes, and then transfer it to target protein. The result of this ubiquitination is the enhancement of the endocytosis of the target chain and the delivery to the lysosome, where it is proteolytically destroyed. Induces ubiquitination not only on lysines, but also on cysteine residues. In Human herpesvirus 8 type P (isolate GK18) (HHV-8), this protein is E3 ubiquitin-protein ligase MIR1 (K3).